A 283-amino-acid polypeptide reads, in one-letter code: Probable aquaporin NIP4-2 (283 aa).

Met1 bears the N-acetylmethionine mark. Positions 1 to 21 (MTSHGEEIEDEQISRIEKGNC) are enriched in basic and acidic residues. The tract at residues 1 to 23 (MTSHGEEIEDEQISRIEKGNCKD) is disordered. 2 helical membrane passes run 51–71 (GTYF…LYGG) and 77–97 (GICV…GHIS). Positions 102–104 (NPA) match the NPA 1 motif. 3 helical membrane-spanning segments follow: residues 120–140 (VPLY…TLRL), 161–181 (ALVA…GVAT), and 189–209 (LAGI…GPIS). Residues 214–216 (NPA) carry the NPA 2 motif. Residues 231–251 (IWVYIVGPFVGIFAGGFVYNF) form a helical membrane-spanning segment. Ser267 bears the Phosphoserine mark.

The protein belongs to the MIP/aquaporin (TC 1.A.8) family. NIP (TC 1.A.8.12) subfamily.

The protein resides in the membrane. In terms of biological role, aquaporins facilitate the transport of water and small neutral solutes across cell membranes. This is Probable aquaporin NIP4-2 (NIP4-2) from Arabidopsis thaliana (Mouse-ear cress).